The primary structure comprises 456 residues: MMPLAVLQVKRLQPKLITPAKLTPQETKFLSDIDDQEFLRFQVPIIMCYKDNPSLNKNLNPVKVIREALSRALVYYYPLARRLREGPNRKLMVDCNGEGILFIEASADVTLEQLGDKMLPPCPLLEEFLFNFPGSGGIIGCPLVLVQMMTCLTCGGFILALRLNHTMCDAAGLLLFLTAIAEMARGAHAPSILPVWERELLFAPDPPRITCAHHEYEDVIGHSDGSYASSNQSNMVQRSFYFGAKEMRVLRKQIPPHLTSTCSTFDLITACLWKYRTLALNINPKEAVRVSCIVNARGKHNNVRLPLGYYGNAFAFPAAISKAEPLCKNPLGYALELVKKAKATMNEEYLRSVADLLVLRGRPQYSSTGSYLIVSDNTRAGFGDVNFGWGQPVFAGPAKALDLISFYVQHKNNTEDGILVPMCLPSSAMERFQQELERITREPKEDICNNLRSTSQ.

Residues His165 and Asn386 each act as proton acceptor in the active site.

Belongs to the plant acyltransferase family. As to expression, expressed at very low levels in the skin of ripe fruit.

In terms of biological role, involved in the biosynthesis of volatile esters which confer ripe apple fruit flavor. Alcohol acyl transferase that can use a wide range of alcohols as substrate to produce esters. The protein is Alcohol acyl transferase 1 allele GSc of Malus domestica (Apple).